Here is a 449-residue protein sequence, read N- to C-terminus: NADH-quinone oxidoreductase subunit H (449 aa).

9 helical membrane passes run 26–46 (FWLILLKGVAVFAFLLLMTLF), 96–116 (PIFILAPILSAVPAFLAFAVI), 136–156 (LPVSVLYMLAAASLGVYGLIL), 177–197 (IISYEVAMGLSFVAVFIYAGT), 211–231 (WYIALVPSFVLYCISMVGETN), 259–279 (FFFLAEYINMVTVSAIATTLF), 298–318 (WVPLIWFVLKLLLFLFFFIWL), 330–350 (FMAFGWKVLIPVGLLWVLVIA), and 365–385 (WLIGAGVVIGIMLIVALLDPG). A disordered region spans residues 396–449 (AERRKLAEAPSLESIPWPPPPPGGAHHRPAVPAGTSANGSSTVIPADPPPRQES).

This sequence belongs to the complex I subunit 1 family. NDH-1 is composed of 14 different subunits. Subunits NuoA, H, J, K, L, M, N constitute the membrane sector of the complex.

It localises to the cell membrane. The enzyme catalyses a quinone + NADH + 5 H(+)(in) = a quinol + NAD(+) + 4 H(+)(out). Functionally, NDH-1 shuttles electrons from NADH, via FMN and iron-sulfur (Fe-S) centers, to quinones in the respiratory chain. The immediate electron acceptor for the enzyme in this species is believed to be ubiquinone. Couples the redox reaction to proton translocation (for every two electrons transferred, four hydrogen ions are translocated across the cytoplasmic membrane), and thus conserves the redox energy in a proton gradient. This subunit may bind ubiquinone. This chain is NADH-quinone oxidoreductase subunit H, found in Frankia alni (strain DSM 45986 / CECT 9034 / ACN14a).